The following is a 223-amino-acid chain: MNSAKVNPSGHAPTPAPTASQGAAFPANRYALFFGLAIAGGALDLWSKEAIFRWRGLPGTQDVYWIIEGYFGIETAVNIGAVFGLGAGQGLVFAAISVFAAAAIIAWLFFFKAARSCWLTFALGCITGGIIGNLYDRLGFWWKPGLPDQWQSGVRDWILWQASDQWKWPNFNIADSLLVTGAIMLLVQSFFFPPPPHGEADGNELPGRRAPDEPTEGTKPAAS.

Positions 1-20 (MNSAKVNPSGHAPTPAPTAS) are disordered. 4 consecutive transmembrane segments (helical) span residues 32–52 (LFFGLAIAGGALDLWSKEAIF), 65–85 (WIIEGYFGIETAVNIGAVFGL), 91–111 (LVFAAISVFAAAAIIAWLFFF), and 116–136 (SCWLTFALGCITGGIIGNLYD). Residues D156 and D175 contribute to the active site. A helical transmembrane segment spans residues 173–193 (IADSLLVTGAIMLLVQSFFFP). Positions 196 to 223 (PHGEADGNELPGRRAPDEPTEGTKPAAS) are disordered.

The protein belongs to the peptidase A8 family.

The protein resides in the cell inner membrane. The enzyme catalyses Release of signal peptides from bacterial membrane prolipoproteins. Hydrolyzes -Xaa-Yaa-Zaa-|-(S,diacylglyceryl)Cys-, in which Xaa is hydrophobic (preferably Leu), and Yaa (Ala or Ser) and Zaa (Gly or Ala) have small, neutral side chains.. It functions in the pathway protein modification; lipoprotein biosynthesis (signal peptide cleavage). Functionally, this protein specifically catalyzes the removal of signal peptides from prolipoproteins. In Rhodopirellula baltica (strain DSM 10527 / NCIMB 13988 / SH1), this protein is Lipoprotein signal peptidase.